The chain runs to 399 residues: Lipoyl synthase, mitochondrial (399 aa).

A mitochondrion-targeting transit peptide spans 1–14 (MALISRSCGAASRY). Residues 39–52 (AASTSSSSSPSPST) are compositionally biased toward low complexity. Positions 39–60 (AASTSSSSSPSPSTHNDRKKDL) are disordered. Positions 128, 133, 139, 159, 163, 166, and 374 each coordinate [4Fe-4S] cluster. The Radical SAM core domain occupies 144–363 (EYATATATIM…EKVGQEMGFI (220 aa)).

This sequence belongs to the radical SAM superfamily. Lipoyl synthase family. [4Fe-4S] cluster is required as a cofactor.

Its subcellular location is the mitochondrion. It carries out the reaction [[Fe-S] cluster scaffold protein carrying a second [4Fe-4S](2+) cluster] + N(6)-octanoyl-L-lysyl-[protein] + 2 oxidized [2Fe-2S]-[ferredoxin] + 2 S-adenosyl-L-methionine + 4 H(+) = [[Fe-S] cluster scaffold protein] + N(6)-[(R)-dihydrolipoyl]-L-lysyl-[protein] + 4 Fe(3+) + 2 hydrogen sulfide + 2 5'-deoxyadenosine + 2 L-methionine + 2 reduced [2Fe-2S]-[ferredoxin]. It functions in the pathway protein modification; protein lipoylation via endogenous pathway; protein N(6)-(lipoyl)lysine from octanoyl-[acyl-carrier-protein]: step 2/2. In terms of biological role, catalyzes the radical-mediated insertion of two sulfur atoms into the C-6 and C-8 positions of the octanoyl moiety bound to the lipoyl domains of lipoate-dependent enzymes, thereby converting the octanoylated domains into lipoylated derivatives. In Danio rerio (Zebrafish), this protein is Lipoyl synthase, mitochondrial (lias).